The primary structure comprises 343 residues: 3-hydroxy-3-methylglutaryl-CoA lyase, cytoplasmic (343 aa).

Gly-2 is lipidated: N-myristoyl glycine. Residues 48-315 (VKIVEVGPRD…NTGVDLHKVM (268 aa)) enclose the Pyruvate carboxyltransferase domain. Residue Arg-56 participates in substrate binding. A divalent metal cation contacts are provided by Asp-57, His-248, and His-250. Cys-281 is a catalytic residue. Asn-290 is a binding site for a divalent metal cation.

This sequence belongs to the HMG-CoA lyase family. Requires a divalent metal cation as cofactor. In terms of tissue distribution, present at high level in duodenum and small intestine (at protein level).

The protein localises to the cytoplasm. Its subcellular location is the cytosol. The protein resides in the endoplasmic reticulum membrane. It carries out the reaction (3S)-3-hydroxy-3-methylglutaryl-CoA = acetoacetate + acetyl-CoA. The protein operates within metabolic intermediate metabolism; (S)-3-hydroxy-3-methylglutaryl-CoA degradation; acetoacetate from (S)-3-hydroxy-3-methylglutaryl-CoA: step 1/1. Non-mitochondrial 3-hydroxy-3-methylglutaryl-CoA lyase that catalyzes a cation-dependent cleavage of (S)-3-hydroxy-3-methylglutaryl-CoA into acetyl-CoA and acetoacetate, a key step in ketogenesis, the products of which support energy production in nonhepatic animal tissues. The protein is 3-hydroxy-3-methylglutaryl-CoA lyase, cytoplasmic (Hmgcll1) of Rattus norvegicus (Rat).